The sequence spans 150 residues: Small ribosomal subunit protein uS13 (150 aa).

It belongs to the universal ribosomal protein uS13 family. As to quaternary structure, part of the 30S ribosomal subunit. Forms a loose heterodimer with protein S19. Forms two bridges to the 50S subunit in the 70S ribosome.

Located at the top of the head of the 30S subunit, it contacts several helices of the 16S rRNA. In the 70S ribosome it contacts the 23S rRNA (bridge B1a) and protein L5 of the 50S subunit (bridge B1b), connecting the 2 subunits; these bridges are implicated in subunit movement. This chain is Small ribosomal subunit protein uS13, found in Methanocorpusculum labreanum (strain ATCC 43576 / DSM 4855 / Z).